Reading from the N-terminus, the 391-residue chain is Probable sugar efflux transporter (391 aa).

A run of 12 helical transmembrane segments spans residues 16–36, 51–71, 82–102, 110–130, 138–158, 170–190, 210–230, 247–267, 277–297, 300–320, 338–358, and 361–381; these read VFVF…PVAL, VGLM…PLML, LLFL…AWNF, MGIA…VIRV, QALG…LPLG, TFGV…KLLP, PLLM…FTTY, ITTL…FLFG, FIAF…VFKN, WVVF…GISL, IYSG…SIVI, and LGLG…LFWL.

This sequence belongs to the major facilitator superfamily. SotB (TC 2.A.1.2) family.

Its subcellular location is the cell inner membrane. In terms of biological role, involved in the efflux of sugars. The physiological role may be the reduction of the intracellular concentration of toxic sugars or sugar metabolites. The polypeptide is Probable sugar efflux transporter (Helicobacter pylori (strain ATCC 700392 / 26695) (Campylobacter pylori)).